A 601-amino-acid chain; its full sequence is Group B oligopeptidase PepB (601 aa).

Histidine 386 lines the Zn(2+) pocket. Glutamate 387 is a catalytic residue. Residues histidine 390 and histidine 393 each contribute to the Zn(2+) site.

This sequence belongs to the peptidase M3B family. Requires Zn(2+) as cofactor.

The protein localises to the cytoplasm. Its function is as follows. Has oligopeptidase activity and degrades a variety of small bioactive peptides, including bradykinin, neurotensin, and peptide fragments of substance P and adrenocorticotropin. Also hydrolyzes the synthetic collagen-like substrate N-(3-[2-furyl]acryloyl)-Leu-Gly-Pro-Ala (FALGPA). The chain is Group B oligopeptidase PepB (pepB) from Streptococcus agalactiae serotype III (strain NEM316).